Here is a 1210-residue protein sequence, read N- to C-terminus: Adenine-specific methyltransferase PglX (1210 aa).

A compositionally biased stretch (basic and acidic residues) spans 1181 to 1194; that stretch reads KQGEHGLTDDDLRG. The tract at residues 1181-1210 is disordered; it reads KQGEHGLTDDDLRGWRPPAATRRRRAAAKQ. A compositionally biased stretch (basic residues) spans 1201–1210; it reads TRRRRAAAKQ.

It belongs to the methyltransferase superfamily. PglX adenine methyltransferase family.

It carries out the reaction a 2'-deoxyadenosine in DNA + S-adenosyl-L-methionine = an N(6)-methyl-2'-deoxyadenosine in DNA + S-adenosyl-L-homocysteine + H(+). In terms of biological role, BREX systems (bacteriophage exclusion) provide immunity against bacteriophage. Part of a type 2 BREX system. Probably a DNA methyltransferase, it methylates phage DNA in vitro in an S-adenosyl-L-methionine-dependent manner. Previously called the phage growth limitation (Pgl) system, it confers protection against bacteriophage phiC31. The bacteria allows one cycle of phage infection, but subsequent cycles are impaired, protecting the original bacterial colony. The system undergoes high rates (10(-3) to 10(-4)) of phase reversion, i.e. loss and regain of phiC31 resistance. When the pglW-pglX-pglY-pglZ genes are transformed into a susceptible S.lividans (strain 1326) they confer resistance to infection by phage phiC31 and phiBT1; all 4 genes are necessary. Its function is as follows. Probably a toxic component of a type II toxin-antitoxin (TA) system. The toxic activity is inhibited by its cognate antitoxin PglZ. May be a subtypes G and alpha restriction enzyme that recognizes and cleaves an unknown sequence. Methylates an adenine residue in the same sequence. The chain is Adenine-specific methyltransferase PglX from Streptomyces coelicolor (strain ATCC BAA-471 / A3(2) / M145).